The following is a 308-amino-acid chain: Electron transfer flavoprotein subunit alpha (308 aa).

252-280 contributes to the FAD binding site; the sequence is LYVAVGISGAIQHLAGMKDSKVIVAINKD.

Belongs to the ETF alpha-subunit/FixB family. Heterodimer of an alpha and a beta subunit. Requires FAD as cofactor.

Its function is as follows. The electron transfer flavoprotein serves as a specific electron acceptor for other dehydrogenases. It transfers the electrons to the main respiratory chain via ETF-ubiquinone oxidoreductase (ETF dehydrogenase). This Paracoccus denitrificans protein is Electron transfer flavoprotein subunit alpha (etfA).